The primary structure comprises 296 residues: 2-haloacid dehalogenase, configuration-inverting (296 aa).

It belongs to the HAD-like hydrolase superfamily. S-2-haloalkanoic acid dehalogenase family.

It carries out the reaction an (S)-2-haloacid + H2O = a (2R)-2-hydroxycarboxylate + a halide anion + H(+). The enzyme catalyses an (R)-2-haloacid + H2O = a (2S)-2-hydroxycarboxylate + a halide anion + H(+). In terms of biological role, dehalogenates both (S)- and (R)-2-haloalkanoic acids to the corresponding (R)- and (S)-hydroxyalkanoic acids, respectively, with inversion of configuration at C-2. Acts on 2-haloalkanoic acids whose carbon chain lengths are five or less. This is 2-haloacid dehalogenase, configuration-inverting (dhlC) from Alcaligenes xylosoxydans xylosoxydans (Achromobacter xylosoxidans).